Consider the following 526-residue polypeptide: Bifunctional purine biosynthesis protein PurH (526 aa).

The region spanning 1–148 is the MGS-like domain; the sequence is MSLNNIIKNA…KNYKDVIVIV (148 aa).

Belongs to the PurH family.

The catalysed reaction is (6R)-10-formyltetrahydrofolate + 5-amino-1-(5-phospho-beta-D-ribosyl)imidazole-4-carboxamide = 5-formamido-1-(5-phospho-D-ribosyl)imidazole-4-carboxamide + (6S)-5,6,7,8-tetrahydrofolate. It catalyses the reaction IMP + H2O = 5-formamido-1-(5-phospho-D-ribosyl)imidazole-4-carboxamide. It participates in purine metabolism; IMP biosynthesis via de novo pathway; 5-formamido-1-(5-phospho-D-ribosyl)imidazole-4-carboxamide from 5-amino-1-(5-phospho-D-ribosyl)imidazole-4-carboxamide (10-formyl THF route): step 1/1. It functions in the pathway purine metabolism; IMP biosynthesis via de novo pathway; IMP from 5-formamido-1-(5-phospho-D-ribosyl)imidazole-4-carboxamide: step 1/1. This is Bifunctional purine biosynthesis protein PurH from Buchnera aphidicola subsp. Schizaphis graminum (strain Sg).